The chain runs to 101 residues: Protein S100-A7-like 2 (101 aa).

EF-hand domains follow at residues 13–48 (IVAM…SGCE) and 50–85 (SDMD…ITID). Residues Asp-63, Asn-65, Asp-67, Lys-69, and Glu-74 each contribute to the Ca(2+) site. His-87 and His-91 together coordinate Zn(2+).

The protein belongs to the S-100 family.

The protein is Protein S100-A7-like 2 (S100A7L2) of Homo sapiens (Human).